Consider the following 559-residue polypeptide: Oxygen-dependent choline dehydrogenase (559 aa).

Position 4–33 (4–33 (DYIIIGAGSAGNVLATRLTEESDVSVLLLE)) interacts with FAD. Positions 182 to 201 (EGFGPMDRTVTPKGRRASTA) are disordered. The active-site Proton acceptor is the His-471.

The protein belongs to the GMC oxidoreductase family. FAD is required as a cofactor.

The enzyme catalyses choline + A = betaine aldehyde + AH2. It carries out the reaction betaine aldehyde + NAD(+) + H2O = glycine betaine + NADH + 2 H(+). It participates in amine and polyamine biosynthesis; betaine biosynthesis via choline pathway; betaine aldehyde from choline (cytochrome c reductase route): step 1/1. Functionally, involved in the biosynthesis of the osmoprotectant glycine betaine. Catalyzes the oxidation of choline to betaine aldehyde and betaine aldehyde to glycine betaine at the same rate. This chain is Oxygen-dependent choline dehydrogenase, found in Pectobacterium carotovorum subsp. carotovorum (strain PC1).